The primary structure comprises 29 residues: Cyclotide mden-A (29 aa).

The cyclopeptide (Gly-Asn) cross-link spans 1–29 (GIPTCGETCTLGTCNTPGCTCSWPICTKN). Disulfide bonds link Cys-5/Cys-19, Cys-9/Cys-21, and Cys-14/Cys-26.

Belongs to the cyclotide family. Moebius subfamily. In terms of processing, this is a cyclic peptide.

Its function is as follows. Probably participates in a plant defense mechanism. The sequence is that of Cyclotide mden-A from Melicytus dentatus (Tree violet).